The chain runs to 286 residues: Light-independent protochlorophyllide reductase iron-sulfur ATP-binding protein (286 aa).

ATP is bound by residues 10-15 (GIGKST) and Lys39. Ser14 lines the Mg(2+) pocket. Residues Cys95 and Cys129 each coordinate [4Fe-4S] cluster. ATP is bound at residue 180–181 (NR).

The protein belongs to the NifH/BchL/ChlL family. As to quaternary structure, homodimer. Protochlorophyllide reductase is composed of three subunits; ChlL, ChlN and ChlB. [4Fe-4S] cluster serves as cofactor.

It catalyses the reaction chlorophyllide a + oxidized 2[4Fe-4S]-[ferredoxin] + 2 ADP + 2 phosphate = protochlorophyllide a + reduced 2[4Fe-4S]-[ferredoxin] + 2 ATP + 2 H2O. The protein operates within porphyrin-containing compound metabolism; chlorophyll biosynthesis (light-independent). Its function is as follows. Component of the dark-operative protochlorophyllide reductase (DPOR) that uses Mg-ATP and reduced ferredoxin to reduce ring D of protochlorophyllide (Pchlide) to form chlorophyllide a (Chlide). This reaction is light-independent. The L component serves as a unique electron donor to the NB-component of the complex, and binds Mg-ATP. This is Light-independent protochlorophyllide reductase iron-sulfur ATP-binding protein from Leptolyngbya boryana (Plectonema boryanum).